A 63-amino-acid polypeptide reads, in one-letter code: Hirudin (63 aa).

An interaction with thrombin active site region spans residues 1-3 (VVY). Cystine bridges form between Cys-6–Cys-14, Cys-16–Cys-28, and Cys-22–Cys-39. A disordered region spans residues 39–63 (CVTGEGTPGPQSHNDGDFEEPEEYL). O-linked (GalNAc...) threonine glycosylation is present at Thr-45. The tract at residues 55–63 (DFEEPEEYL) is interaction with fibrinogen-binding exosite of thrombin. Tyr-62 carries the post-translational modification Sulfotyrosine.

Belongs to the protease inhibitor I14 (hirudin) family.

Its subcellular location is the secreted. In terms of biological role, hirudin is a potent thrombin-specific protease inhibitor. It forms a stable non-covalent complex with alpha-thrombin, thereby abolishing its ability to cleave fibrinogen. The polypeptide is Hirudin (Poecilobdella viridis (Indian freshwater leech)).